Here is a 66-residue protein sequence, read N- to C-terminus: Alpha-actitoxin-Ms11a-1 (66 aa).

A signal peptide spans 1-24 (MASKIFFVLAVFLVMSAVLPESFA). 3 cysteine pairs are disulfide-bonded: cysteine 26/cysteine 41, cysteine 33/cysteine 46, and cysteine 40/cysteine 61.

The protein localises to the secreted. Its subcellular location is the nematocyst. Alpha-toxins act on postsynaptic membranes, they bind to the nicotinic acetylcholine receptors (nAChR) and thus inhibit them. This toxin competes with alpha-bungarotoxin for binding to orthosteric sites on muscle-type T.carlifornicus (IC(50)=408 nM) and human alpha-7/CHRNA7 nAChRs (IC(50)=14.16 uM). This is Alpha-actitoxin-Ms11a-1 from Metridium senile (Brown sea anemone).